We begin with the raw amino-acid sequence, 304 residues long: Cell surface-binding protein OPG105 (304 aa).

Residues 1 to 235 enclose the Alpha-carbonic anhydrase domain; the sequence is MPQQLSPINI…NDDTQVYYSG (235 aa). Residues 1–275 are Virion surface-facing; sequence MPQQLSPINI…YQKYIEGNKT (275 aa). Residues 276 to 294 form a helical membrane-spanning segment; it reads FAIIAIVFVFILTAILFLM. The Intravirion portion of the chain corresponds to 295-304; that stretch reads SQRYSREKQN.

The protein belongs to the alpha-carbonic anhydrase family. Homodimer; disulfide-linked. In terms of processing, apparently non-glycosylated.

The protein localises to the virion membrane. Functionally, binds to chondroitin sulfate on the cell surface to provide virion attachment to target cell. The sequence is that of Cell surface-binding protein OPG105 (OPG105) from Monkeypox virus (strain Zaire-96-I-16) (MPX).